The chain runs to 340 residues: Heat-inducible transcription repressor HrcA (340 aa).

The protein belongs to the HrcA family.

Its function is as follows. Negative regulator of class I heat shock genes (grpE-dnaK-dnaJ and groELS operons). Prevents heat-shock induction of these operons. In Clavibacter michiganensis subsp. michiganensis (strain NCPPB 382), this protein is Heat-inducible transcription repressor HrcA.